Reading from the N-terminus, the 430-residue chain is Histidinol dehydrogenase (430 aa).

Positions 124, 185, and 208 each coordinate NAD(+). 3 residues coordinate substrate: Ser-233, Gln-255, and His-258. The Zn(2+) site is built by Gln-255 and His-258. Residues Glu-324 and His-325 each act as proton acceptor in the active site. Substrate contacts are provided by His-325, Asp-358, Glu-412, and His-418. Asp-358 lines the Zn(2+) pocket. Residue His-418 coordinates Zn(2+).

The protein belongs to the histidinol dehydrogenase family. The cofactor is Zn(2+).

It carries out the reaction L-histidinol + 2 NAD(+) + H2O = L-histidine + 2 NADH + 3 H(+). It participates in amino-acid biosynthesis; L-histidine biosynthesis; L-histidine from 5-phospho-alpha-D-ribose 1-diphosphate: step 9/9. Functionally, catalyzes the sequential NAD-dependent oxidations of L-histidinol to L-histidinaldehyde and then to L-histidine. The chain is Histidinol dehydrogenase from Leptospira biflexa serovar Patoc (strain Patoc 1 / Ames).